Reading from the N-terminus, the 88-residue chain is Serine protease inhibitor Kazal-type 11 (88 aa).

The N-terminal stretch at 1 to 24 (MSSTWIKFLFILTLVLLPYFVAES) is a signal peptide. Positions 32 to 87 (LRKVPNCTLYKSESDCSRTLIPVCADNQMTYYNACYFCLEQLVSPIKYKYHGICTK) constitute a Kazal-like domain. An N-linked (GlcNAc...) asparagine glycan is attached at asparagine 37. 3 disulfide bridges follow: cysteine 38/cysteine 69, cysteine 47/cysteine 66, and cysteine 55/cysteine 85.

Expressed in epydiymis, in the caput. Also expressed in seminal vesicles.

Its subcellular location is the secreted. Probable serine protease inhibitor. The protein is Serine protease inhibitor Kazal-type 11 (Spink11) of Mus musculus (Mouse).